We begin with the raw amino-acid sequence, 458 residues long: MASSTDTILKGKYPAKEHVRKVVEYIKSKEPEAEGVLYLEAQKTIMIEDNDEAAPFRQRRFFYYLTGCDLPDAYFTYDIATDKSTLFIPPIDPESVIWTGLPLSPKEALALYDVDEVLTTDTINAQLALPNQTKVWAIAPQISTHITFLEFPQKDFTLLKEAIEEARVRKSEYEVALMRKANEISKVGHTAVLKAVKHAKNERELEALFIKESIANGAREQAYHSIVASGTAAATLHYMKNSEELDGKLNLLLDAGGEYKCYASDITRTFPINGRFTPESRSIYDIVLSMQSQCISMLKAGVSWDEVHLLAHKVAIEGLLSLGILKGDKEEILKARTSVAFFPHGLGHYLGMDTHDTGGHPNYEDKDRLFRYLRVRGNLPEGSVVTVEPGIYFCRFIIEPYLKDPAHAQYINSDILEKYWEVGGVRIEDNVLITKDGYDNLTTVVKDVEEMEKIINES.

D254, D265, E388, and E428 together coordinate Mn(2+).

The protein belongs to the peptidase M24B family. The cofactor is Mn(2+).

It catalyses the reaction Release of any N-terminal amino acid, including proline, that is linked to proline, even from a dipeptide or tripeptide.. Its function is as follows. Catalyzes the removal of a penultimate prolyl residue from the N-termini of peptides. The polypeptide is Probable Xaa-Pro aminopeptidase pepP (pepP) (Botryotinia fuckeliana (strain B05.10) (Noble rot fungus)).